The primary structure comprises 350 residues: Histidinol-phosphate aminotransferase (350 aa).

At K220 the chain carries N6-(pyridoxal phosphate)lysine.

This sequence belongs to the class-II pyridoxal-phosphate-dependent aminotransferase family. Histidinol-phosphate aminotransferase subfamily. As to quaternary structure, homodimer. Requires pyridoxal 5'-phosphate as cofactor.

The catalysed reaction is L-histidinol phosphate + 2-oxoglutarate = 3-(imidazol-4-yl)-2-oxopropyl phosphate + L-glutamate. The protein operates within amino-acid biosynthesis; L-histidine biosynthesis; L-histidine from 5-phospho-alpha-D-ribose 1-diphosphate: step 7/9. The sequence is that of Histidinol-phosphate aminotransferase from Macrococcus caseolyticus (strain JCSC5402) (Macrococcoides caseolyticum).